A 218-amino-acid polypeptide reads, in one-letter code: Ribose-5-phosphate isomerase A (218 aa).

Substrate is bound by residues 27–30, 80–83, and 93–96; these read TGST, DGAD, and KGGG. Glu-102 acts as the Proton acceptor in catalysis. Lys-120 provides a ligand contact to substrate.

Belongs to the ribose 5-phosphate isomerase family. Homodimer.

It catalyses the reaction aldehydo-D-ribose 5-phosphate = D-ribulose 5-phosphate. It functions in the pathway carbohydrate degradation; pentose phosphate pathway; D-ribose 5-phosphate from D-ribulose 5-phosphate (non-oxidative stage): step 1/1. Its function is as follows. Catalyzes the reversible conversion of ribose-5-phosphate to ribulose 5-phosphate. The sequence is that of Ribose-5-phosphate isomerase A from Picrophilus torridus (strain ATCC 700027 / DSM 9790 / JCM 10055 / NBRC 100828 / KAW 2/3).